Consider the following 246-residue polypeptide: tRNA (guanine-N(7)-)-methyltransferase (246 aa).

Residues Glu-76, Glu-101, Asp-128, and Asp-151 each coordinate S-adenosyl-L-methionine. Residue Asp-151 is part of the active site. Residue Lys-155 coordinates substrate. Positions 157 to 162 (RHNKRR) are interaction with RNA. Substrate contacts are provided by residues Asp-187 and 222 to 225 (TKFE).

It belongs to the class I-like SAM-binding methyltransferase superfamily. TrmB family.

The enzyme catalyses guanosine(46) in tRNA + S-adenosyl-L-methionine = N(7)-methylguanosine(46) in tRNA + S-adenosyl-L-homocysteine. Its pathway is tRNA modification; N(7)-methylguanine-tRNA biosynthesis. Catalyzes the formation of N(7)-methylguanine at position 46 (m7G46) in tRNA. This chain is tRNA (guanine-N(7)-)-methyltransferase, found in Dechloromonas aromatica (strain RCB).